The following is a 31-amino-acid chain: Cytochrome b6-f complex subunit 6 (31 aa).

The chain crosses the membrane as a helical span at residues 4 to 24 (ITSYFGFLLAALTITSALFIG).

It belongs to the PetL family. In terms of assembly, the 4 large subunits of the cytochrome b6-f complex are cytochrome b6, subunit IV (17 kDa polypeptide, PetD), cytochrome f and the Rieske protein, while the 4 small subunits are PetG, PetL, PetM and PetN. The complex functions as a dimer.

The protein resides in the plastid. Its subcellular location is the chloroplast thylakoid membrane. Component of the cytochrome b6-f complex, which mediates electron transfer between photosystem II (PSII) and photosystem I (PSI), cyclic electron flow around PSI, and state transitions. PetL is important for photoautotrophic growth as well as for electron transfer efficiency and stability of the cytochrome b6-f complex. This is Cytochrome b6-f complex subunit 6 from Humulus lupulus (European hop).